The following is a 94-amino-acid chain: MSDSFHYQYDRASPERLKPTIYSWTRLRQSTRAQNENEQAKRRQGILEHKRGGSMEMNKFIDESAYMEWEKQLENASEDYAIEPSDLEEEVDQL.

This is an uncharacterized protein from Schizosaccharomyces pombe (strain 972 / ATCC 24843) (Fission yeast).